Here is a 237-residue protein sequence, read N- to C-terminus: 1-(5-phosphoribosyl)-5-[(5-phosphoribosylamino)methylideneamino] imidazole-4-carboxamide isomerase (237 aa).

Asp8 (proton acceptor) is an active-site residue. Catalysis depends on Asp129, which acts as the Proton donor.

Belongs to the HisA/HisF family.

It is found in the cytoplasm. The catalysed reaction is 1-(5-phospho-beta-D-ribosyl)-5-[(5-phospho-beta-D-ribosylamino)methylideneamino]imidazole-4-carboxamide = 5-[(5-phospho-1-deoxy-D-ribulos-1-ylimino)methylamino]-1-(5-phospho-beta-D-ribosyl)imidazole-4-carboxamide. Its pathway is amino-acid biosynthesis; L-histidine biosynthesis; L-histidine from 5-phospho-alpha-D-ribose 1-diphosphate: step 4/9. This chain is 1-(5-phosphoribosyl)-5-[(5-phosphoribosylamino)methylideneamino] imidazole-4-carboxamide isomerase, found in Clostridium botulinum (strain Alaska E43 / Type E3).